The sequence spans 270 residues: Aliphatic sulfonates import ATP-binding protein SsuB (270 aa).

Positions 17-238 (LASSGLRKTF…ARGSHRLAAL (222 aa)) constitute an ABC transporter domain. ATP is bound at residue 49 to 56 (GRSGCGKS). Residues 249 to 270 (APGAAPEPDPVAPLPTQLRWAH) form a disordered region.

This sequence belongs to the ABC transporter superfamily. Aliphatic sulfonates importer (TC 3.A.1.17.2) family. In terms of assembly, the complex is composed of two ATP-binding proteins (SsuB), two transmembrane proteins (SsuC) and a solute-binding protein (SsuA).

It localises to the cell inner membrane. The catalysed reaction is ATP + H2O + aliphatic sulfonate-[sulfonate-binding protein]Side 1 = ADP + phosphate + aliphatic sulfonateSide 2 + [sulfonate-binding protein]Side 1.. In terms of biological role, part of the ABC transporter complex SsuABC involved in aliphatic sulfonates import. Responsible for energy coupling to the transport system. The protein is Aliphatic sulfonates import ATP-binding protein SsuB of Pseudomonas putida (Arthrobacter siderocapsulatus).